The chain runs to 196 residues: MAALRRLVSGCGRQLQAFLAGPAATGWLWLPARGLREVVKIQEGKTTVIEGRITETPKATPDPPNPSGQCPICRWNLKHKYTYEDVLLLSQFIRPYGGMLPRRVTGLCREEHRKIEECVKMAHRAGLLPNHRPQLPEGCLPKDKPKLNRYLTRWAPKSVKPIYKKGHRWNKVGMAVGSPLLKDNVCYSRRPLKMMH.

The N-terminal 34 residues, 1 to 34 (MAALRRLVSGCGRQLQAFLAGPAATGWLWLPARG), are a transit peptide targeting the mitochondrion.

Belongs to the bacterial ribosomal protein bS18 family. Mitochondrion-specific ribosomal protein mL66 subfamily. As to quaternary structure, component of the mitochondrial ribosome small subunit (28S) which comprises a 12S rRNA and about 30 distinct proteins.

It localises to the mitochondrion. The chain is Large ribosomal subunit protein mL66 (Mrps18a) from Mus musculus (Mouse).